An 81-amino-acid polypeptide reads, in one-letter code: Defensin-like protein b (81 aa).

An N-terminal signal peptide occupies residues 1–26; the sequence is MRNATFFIVFYVFISLVLSNVQDVTA. 4 cysteine pairs are disulfide-bonded: Cys-31–Cys-81, Cys-42–Cys-66, Cys-50–Cys-76, and Cys-64–Cys-78.

It belongs to the DEFL family. In terms of tissue distribution, expressed in microspores and in young and mature anthers.

It is found in the secreted. In terms of biological role, involved in self-incompatibility. This chain is Defensin-like protein b (SCRb-1), found in Arabidopsis lyrata (Lyre-leaved rock-cress).